The sequence spans 76 residues: Bowman-Birk type proteinase inhibitor DE-3 (76 aa).

7 disulfides stabilise this stretch: Cys16–Cys70, Cys17–Cys32, Cys20–Cys66, Cys22–Cys30, Cys40–Cys47, Cys44–Cys59, and Cys49–Cys57.

Belongs to the Bowman-Birk serine protease inhibitor family.

This Macrotyloma axillare (Perennial horse gram) protein is Bowman-Birk type proteinase inhibitor DE-3.